We begin with the raw amino-acid sequence, 266 residues long: ATP synthase subunit a (266 aa).

5 consecutive transmembrane segments (helical) span residues 28–48 (SINV…LVIF), 88–108 (LIAP…LMDL), 141–161 (DVNI…FYSI), 206–226 (LFGN…LLPW), and 237–257 (AIFH…LTVV).

It belongs to the ATPase A chain family. F-type ATPases have 2 components, CF(1) - the catalytic core - and CF(0) - the membrane proton channel. CF(1) has five subunits: alpha(3), beta(3), gamma(1), delta(1), epsilon(1). CF(0) has three main subunits: a(1), b(2) and c(9-12). The alpha and beta chains form an alternating ring which encloses part of the gamma chain. CF(1) is attached to CF(0) by a central stalk formed by the gamma and epsilon chains, while a peripheral stalk is formed by the delta and b chains.

Its subcellular location is the cell inner membrane. In terms of biological role, key component of the proton channel; it plays a direct role in the translocation of protons across the membrane. The chain is ATP synthase subunit a from Pectobacterium carotovorum subsp. carotovorum (strain PC1).